The sequence spans 330 residues: Olfactory receptor 5P73 (330 aa).

Residues 1-28 (MAFLEDGNHTTVTEFFLLGLTDDPVLRD) are Extracellular-facing. N-linked (GlcNAc...) asparagine glycosylation occurs at asparagine 8. The helical transmembrane segment at 29-49 (ILFIIILCIYLVTVSGNLSTI) threads the bilayer. At 50–57 (LLIRVSSQ) the chain is on the cytoplasmic side. A helical membrane pass occupies residues 58 to 78 (LHHPMYFILSHLASVDIGISS). The Extracellular portion of the chain corresponds to 79 to 102 (SVTPNMLATFLVKQNTISYIGCSI). Cysteine 100 and cysteine 192 are joined by a disulfide. A helical transmembrane segment spans residues 103 to 123 (QFTSAAFFGTVECFLLATMAY). The Cytoplasmic segment spans residues 124–136 (DRFVAICNPLLYS). A helical membrane pass occupies residues 137-157 (TKMSTEACIQLVVGSYIQGFL). The Extracellular segment spans residues 158–199 (NASFFTLSFFSLFFCGPNRINDFYCDFAPLLELSCSDVTVAV). The chain crosses the membrane as a helical span at residues 200–220 (VITSISAGFITLTTVFVIAIS). The Cytoplasmic segment spans residues 221 to 240 (YSCIFITIMKMHSTESRCKA). Residues 241 to 261 (FSTCTSHLTAVILFYGTAIFI) traverse the membrane as a helical segment. Topologically, residues 262 to 274 (YVMPKSSYSTDQN) are extracellular. Residues 275 to 295 (KVLSIFYTVVIPMLNPLIYSL) form a helical membrane-spanning segment. Topologically, residues 296 to 330 (RNNEIKEALKRHLGKKVFSYGNLFCKTHYNHNYPV) are cytoplasmic.

This sequence belongs to the G-protein coupled receptor 1 family.

It localises to the cell membrane. Functionally, potential odorant receptor. The chain is Olfactory receptor 5P73 from Mus musculus (Mouse).